The chain runs to 556 residues: 2-succinyl-5-enolpyruvyl-6-hydroxy-3-cyclohexene-1-carboxylate synthase (556 aa).

It belongs to the TPP enzyme family. MenD subfamily. As to quaternary structure, homodimer. The cofactor is Mg(2+). Mn(2+) is required as a cofactor. It depends on thiamine diphosphate as a cofactor.

It carries out the reaction isochorismate + 2-oxoglutarate + H(+) = 5-enolpyruvoyl-6-hydroxy-2-succinyl-cyclohex-3-ene-1-carboxylate + CO2. It participates in quinol/quinone metabolism; 1,4-dihydroxy-2-naphthoate biosynthesis; 1,4-dihydroxy-2-naphthoate from chorismate: step 2/7. Its pathway is quinol/quinone metabolism; menaquinone biosynthesis. Functionally, catalyzes the thiamine diphosphate-dependent decarboxylation of 2-oxoglutarate and the subsequent addition of the resulting succinic semialdehyde-thiamine pyrophosphate anion to isochorismate to yield 2-succinyl-5-enolpyruvyl-6-hydroxy-3-cyclohexene-1-carboxylate (SEPHCHC). This is 2-succinyl-5-enolpyruvyl-6-hydroxy-3-cyclohexene-1-carboxylate synthase from Escherichia coli O157:H7.